The primary structure comprises 132 residues: S-protein homolog 8 (132 aa).

The N-terminal stretch at 1–20 (MHSLSWFLLVIGLSVGLSSG) is a signal peptide.

The protein belongs to the plant self-incompatibility (S1) protein family. As to expression, mostly expressed in seedlings, stems, leaves and floral tissues, and, to a lower extent, in roots.

The protein resides in the secreted. The polypeptide is S-protein homolog 8 (Arabidopsis thaliana (Mouse-ear cress)).